The following is a 475-amino-acid chain: Aspartyl/glutamyl-tRNA(Asn/Gln) amidotransferase subunit B (475 aa).

It belongs to the GatB/GatE family. GatB subfamily. In terms of assembly, heterotrimer of A, B and C subunits.

It carries out the reaction L-glutamyl-tRNA(Gln) + L-glutamine + ATP + H2O = L-glutaminyl-tRNA(Gln) + L-glutamate + ADP + phosphate + H(+). The catalysed reaction is L-aspartyl-tRNA(Asn) + L-glutamine + ATP + H2O = L-asparaginyl-tRNA(Asn) + L-glutamate + ADP + phosphate + 2 H(+). In terms of biological role, allows the formation of correctly charged Asn-tRNA(Asn) or Gln-tRNA(Gln) through the transamidation of misacylated Asp-tRNA(Asn) or Glu-tRNA(Gln) in organisms which lack either or both of asparaginyl-tRNA or glutaminyl-tRNA synthetases. The reaction takes place in the presence of glutamine and ATP through an activated phospho-Asp-tRNA(Asn) or phospho-Glu-tRNA(Gln). The chain is Aspartyl/glutamyl-tRNA(Asn/Gln) amidotransferase subunit B from Staphylococcus haemolyticus (strain JCSC1435).